The following is a 95-amino-acid chain: Large ribosomal subunit protein bL27 (95 aa).

A propeptide spanning residues 1–8 (MEMNLQFF) is cleaved from the precursor. Positions 1–34 (MEMNLQFFSHHKGGGSTSNGRDSAGRRLGTKRAD) are disordered.

Belongs to the bacterial ribosomal protein bL27 family. The N-terminus is cleaved by ribosomal processing cysteine protease Prp.

This chain is Large ribosomal subunit protein bL27, found in Pediococcus pentosaceus (strain ATCC 25745 / CCUG 21536 / LMG 10740 / 183-1w).